A 62-amino-acid chain; its full sequence is Chromatin protein Cren7 (62 aa).

Belongs to the Cren7 family. In terms of assembly, monomer. Methylated at multiple sites, to varying extents.

It is found in the chromosome. Its subcellular location is the cytoplasm. Functionally, a chromatin protein, binds double-stranded DNA without sequence specificity. Constrains negative DNA supercoils. The polypeptide is Chromatin protein Cren7 (Staphylothermus marinus (strain ATCC 43588 / DSM 3639 / JCM 9404 / F1)).